The following is a 334-amino-acid chain: N,N'-diacetyllegionaminic acid synthase (334 aa).

In terms of domain architecture, AFP-like spans S282–E334.

It catalyses the reaction 2,4-diacetamido-2,4,6-trideoxy-alpha-D-mannopyranose + phosphoenolpyruvate + H2O = N,N-diacetyllegionaminate + phosphate. Its function is as follows. Involved in biosynthesis of legionaminic acid (5,7-diamino-3,5,7,9-tetradeoxy-D-glycero-D-galacto-non-2-ulosonic acid)(Leg), a sialic acid-like derivative that is incorporated into flagellin via O-linkage to Ser/Thr. Catalyzes the condensation of 2,4-diacetamido-2,4,6-trideoxymannose with phosphoenolpyruvate (PEP) to give N,N'-diacetyllegionaminic acid. In Campylobacter jejuni subsp. jejuni serotype O:2 (strain ATCC 700819 / NCTC 11168), this protein is N,N'-diacetyllegionaminic acid synthase (legI).